Reading from the N-terminus, the 476-residue chain is ATP synthase subunit beta (476 aa).

An ATP-binding site is contributed by 161–168; the sequence is GGAGVGKT.

It belongs to the ATPase alpha/beta chains family. In terms of assembly, F-type ATPases have 2 components, CF(1) - the catalytic core - and CF(0) - the membrane proton channel. CF(1) has five subunits: alpha(3), beta(3), gamma(1), delta(1), epsilon(1). CF(0) has three main subunits: a(1), b(2) and c(9-12). The alpha and beta chains form an alternating ring which encloses part of the gamma chain. CF(1) is attached to CF(0) by a central stalk formed by the gamma and epsilon chains, while a peripheral stalk is formed by the delta and b chains.

The protein localises to the cell membrane. It carries out the reaction ATP + H2O + 4 H(+)(in) = ADP + phosphate + 5 H(+)(out). Produces ATP from ADP in the presence of a proton gradient across the membrane. The catalytic sites are hosted primarily by the beta subunits. The sequence is that of ATP synthase subunit beta from Mycolicibacterium gilvum (strain PYR-GCK) (Mycobacterium gilvum (strain PYR-GCK)).